A 386-amino-acid polypeptide reads, in one-letter code: Alanine racemase (386 aa).

The active-site Proton acceptor; specific for D-alanine is the lysine 48. At lysine 48 the chain carries N6-(pyridoxal phosphate)lysine. Arginine 149 contributes to the substrate binding site. Catalysis depends on tyrosine 278, which acts as the Proton acceptor; specific for L-alanine. Methionine 326 is a substrate binding site.

Belongs to the alanine racemase family. Pyridoxal 5'-phosphate is required as a cofactor.

The catalysed reaction is L-alanine = D-alanine. It functions in the pathway amino-acid biosynthesis; D-alanine biosynthesis; D-alanine from L-alanine: step 1/1. In terms of biological role, catalyzes the interconversion of L-alanine and D-alanine. May also act on other amino acids. This Nostoc sp. (strain PCC 7120 / SAG 25.82 / UTEX 2576) protein is Alanine racemase (alr).